The following is a 101-amino-acid chain: NAD(P)H-quinone oxidoreductase subunit 4L, chloroplastic (101 aa).

3 helical membrane passes run 2–22 (MLEHVLVLSAYLFSIGIYGLI), 32–52 (MCLELILNAVNMNLVTFSDLF), and 61–81 (IFSIFVIAIAAAEAAIGPAIV).

It belongs to the complex I subunit 4L family. In terms of assembly, NDH is composed of at least 16 different subunits, 5 of which are encoded in the nucleus.

It localises to the plastid. It is found in the chloroplast thylakoid membrane. It catalyses the reaction a plastoquinone + NADH + (n+1) H(+)(in) = a plastoquinol + NAD(+) + n H(+)(out). It carries out the reaction a plastoquinone + NADPH + (n+1) H(+)(in) = a plastoquinol + NADP(+) + n H(+)(out). NDH shuttles electrons from NAD(P)H:plastoquinone, via FMN and iron-sulfur (Fe-S) centers, to quinones in the photosynthetic chain and possibly in a chloroplast respiratory chain. The immediate electron acceptor for the enzyme in this species is believed to be plastoquinone. Couples the redox reaction to proton translocation, and thus conserves the redox energy in a proton gradient. The protein is NAD(P)H-quinone oxidoreductase subunit 4L, chloroplastic of Chloranthus spicatus (Chulantree).